Consider the following 329-residue polypeptide: GTP 3',8-cyclase (329 aa).

In terms of domain architecture, Radical SAM core spans 8–234 (AFARKFYYLR…QLRQRSDGPA (227 aa)). Position 17 (Arg17) interacts with GTP. Residues Cys24 and Cys28 each contribute to the [4Fe-4S] cluster site. Residue Tyr30 coordinates S-adenosyl-L-methionine. A [4Fe-4S] cluster-binding site is contributed by Cys31. Arg68 is a GTP binding site. Gly72 serves as a coordination point for S-adenosyl-L-methionine. GTP is bound at residue Thr99. Residue Ser123 coordinates S-adenosyl-L-methionine. Lys160 contributes to the GTP binding site. Met194 is an S-adenosyl-L-methionine binding site. Positions 257 and 260 each coordinate [4Fe-4S] cluster. Residue 262–264 (RLR) coordinates GTP. A [4Fe-4S] cluster-binding site is contributed by Cys274.

This sequence belongs to the radical SAM superfamily. MoaA family. As to quaternary structure, monomer and homodimer. It depends on [4Fe-4S] cluster as a cofactor.

The enzyme catalyses GTP + AH2 + S-adenosyl-L-methionine = (8S)-3',8-cyclo-7,8-dihydroguanosine 5'-triphosphate + 5'-deoxyadenosine + L-methionine + A + H(+). It functions in the pathway cofactor biosynthesis; molybdopterin biosynthesis. In terms of biological role, catalyzes the cyclization of GTP to (8S)-3',8-cyclo-7,8-dihydroguanosine 5'-triphosphate. This Escherichia coli O127:H6 (strain E2348/69 / EPEC) protein is GTP 3',8-cyclase.